Reading from the N-terminus, the 334-residue chain is Tetratricopeptide repeat protein 24 (334 aa).

TPR repeat units lie at residues 35–68 (GPFY…CRQP), 72–105 (ATVL…HGSV), 112–145 (GRSF…AQDT), and 152–185 (WQAC…CQHE). The interval 220–258 (PGKLQTSRKAKTSARVQSSAEDAQESQWEGEASEGGHEK) is disordered. Residues 233–246 (ARVQSSAEDAQESQ) show a composition bias toward polar residues.

The sequence is that of Tetratricopeptide repeat protein 24 (Ttc24) from Mus musculus (Mouse).